Consider the following 314-residue polypeptide: Acetyl-coenzyme A carboxylase carboxyl transferase subunit alpha (314 aa).

In terms of domain architecture, CoA carboxyltransferase C-terminal spans 32–289 (EIDMLEASLA…KRTFESHLSE (258 aa)).

This sequence belongs to the AccA family. In terms of assembly, acetyl-CoA carboxylase is a heterohexamer composed of biotin carboxyl carrier protein (AccB), biotin carboxylase (AccC) and two subunits each of ACCase subunit alpha (AccA) and ACCase subunit beta (AccD).

Its subcellular location is the cytoplasm. The catalysed reaction is N(6)-carboxybiotinyl-L-lysyl-[protein] + acetyl-CoA = N(6)-biotinyl-L-lysyl-[protein] + malonyl-CoA. Its pathway is lipid metabolism; malonyl-CoA biosynthesis; malonyl-CoA from acetyl-CoA: step 1/1. Its function is as follows. Component of the acetyl coenzyme A carboxylase (ACC) complex. First, biotin carboxylase catalyzes the carboxylation of biotin on its carrier protein (BCCP) and then the CO(2) group is transferred by the carboxyltransferase to acetyl-CoA to form malonyl-CoA. In Staphylococcus saprophyticus subsp. saprophyticus (strain ATCC 15305 / DSM 20229 / NCIMB 8711 / NCTC 7292 / S-41), this protein is Acetyl-coenzyme A carboxylase carboxyl transferase subunit alpha.